Consider the following 57-residue polypeptide: MNLLQVVRDHWVHVLVPMGFVFGYYLDRKNDEKLTAFRNKSLLYKRELKPNEEVTWK.

The helical transmembrane segment at 10-26 (HWVHVLVPMGFVFGYYL) threads the bilayer.

This sequence belongs to the complex I NDUFB1 subunit family. In terms of assembly, complex I is composed of 45 different subunits.

Its subcellular location is the mitochondrion inner membrane. Functionally, accessory subunit of the mitochondrial membrane respiratory chain NADH dehydrogenase (Complex I) that is believed not to be involved in catalysis. Complex I functions in the transfer of electrons from NADH to the respiratory chain. The immediate electron acceptor for the enzyme is believed to be ubiquinone. The sequence is that of NADH dehydrogenase [ubiquinone] 1 beta subcomplex subunit 1 (NDUFB1) from Bos taurus (Bovine).